A 782-amino-acid polypeptide reads, in one-letter code: Endonuclease MutS2 (782 aa).

An ATP-binding site is contributed by 336–343 (GPNTGGKT). The Smr domain maps to 707 to 782 (LDLRGYRYED…GFGVTVATLK (76 aa)).

Belongs to the DNA mismatch repair MutS family. MutS2 subfamily. In terms of assembly, homodimer. Binds to stalled ribosomes, contacting rRNA.

Endonuclease that is involved in the suppression of homologous recombination and thus may have a key role in the control of bacterial genetic diversity. In terms of biological role, acts as a ribosome collision sensor, splitting the ribosome into its 2 subunits. Detects stalled/collided 70S ribosomes which it binds and splits by an ATP-hydrolysis driven conformational change. Acts upstream of the ribosome quality control system (RQC), a ribosome-associated complex that mediates the extraction of incompletely synthesized nascent chains from stalled ribosomes and their subsequent degradation. Probably generates substrates for RQC. The protein is Endonuclease MutS2 of Staphylococcus aureus (strain COL).